A 283-amino-acid chain; its full sequence is Formamidopyrimidine-DNA glycosylase (283 aa).

The Schiff-base intermediate with DNA role is filled by Pro2. Residue Glu3 is the Proton donor of the active site. Lys60 acts as the Proton donor; for beta-elimination activity in catalysis. DNA is bound by residues His95, Arg114, and Arg159. Residues 244-278 form an FPG-type zinc finger; the sequence is WVYGRHNQPCRVCGTPIERIKLGGRSSHFCPQCQP. Arg268 (proton donor; for delta-elimination activity) is an active-site residue.

This sequence belongs to the FPG family. In terms of assembly, monomer. It depends on Zn(2+) as a cofactor.

The enzyme catalyses Hydrolysis of DNA containing ring-opened 7-methylguanine residues, releasing 2,6-diamino-4-hydroxy-5-(N-methyl)formamidopyrimidine.. It catalyses the reaction 2'-deoxyribonucleotide-(2'-deoxyribose 5'-phosphate)-2'-deoxyribonucleotide-DNA = a 3'-end 2'-deoxyribonucleotide-(2,3-dehydro-2,3-deoxyribose 5'-phosphate)-DNA + a 5'-end 5'-phospho-2'-deoxyribonucleoside-DNA + H(+). In terms of biological role, involved in base excision repair of DNA damaged by oxidation or by mutagenic agents. Acts as a DNA glycosylase that recognizes and removes damaged bases. Has a preference for oxidized purines, such as 7,8-dihydro-8-oxoguanine (8-oxoG). Has AP (apurinic/apyrimidinic) lyase activity and introduces nicks in the DNA strand. Cleaves the DNA backbone by beta-delta elimination to generate a single-strand break at the site of the removed base with both 3'- and 5'-phosphates. The chain is Formamidopyrimidine-DNA glycosylase from Crocosphaera subtropica (strain ATCC 51142 / BH68) (Cyanothece sp. (strain ATCC 51142)).